Consider the following 437-residue polypeptide: UDP-N-acetylmuramoylalanine--D-glutamate ligase (437 aa).

Residue Gly112–Thr118 coordinates ATP.

It belongs to the MurCDEF family.

Its subcellular location is the cytoplasm. It carries out the reaction UDP-N-acetyl-alpha-D-muramoyl-L-alanine + D-glutamate + ATP = UDP-N-acetyl-alpha-D-muramoyl-L-alanyl-D-glutamate + ADP + phosphate + H(+). Its pathway is cell wall biogenesis; peptidoglycan biosynthesis. Its function is as follows. Cell wall formation. Catalyzes the addition of glutamate to the nucleotide precursor UDP-N-acetylmuramoyl-L-alanine (UMA). The protein is UDP-N-acetylmuramoylalanine--D-glutamate ligase of Haemophilus influenzae (strain PittGG).